The chain runs to 263 residues: Indole-3-glycerol phosphate synthase (263 aa).

This sequence belongs to the TrpC family.

It catalyses the reaction 1-(2-carboxyphenylamino)-1-deoxy-D-ribulose 5-phosphate + H(+) = (1S,2R)-1-C-(indol-3-yl)glycerol 3-phosphate + CO2 + H2O. It functions in the pathway amino-acid biosynthesis; L-tryptophan biosynthesis; L-tryptophan from chorismate: step 4/5. This is Indole-3-glycerol phosphate synthase from Sulfurimonas denitrificans (strain ATCC 33889 / DSM 1251) (Thiomicrospira denitrificans (strain ATCC 33889 / DSM 1251)).